The primary structure comprises 261 residues: Syntaxin-7 (261 aa).

N-acetylserine is present on S2. Over 2–238 (SYTPGIGGDP…NYQRKSRKTL (237 aa)) the chain is Cytoplasmic. T4 bears the Phosphothreonine mark. Residues 47–68 (ELRQQLQQEQQYTNQLAKETDK) adopt a coiled-coil conformation. T79 carries the phosphothreonine modification. S125, S126, S129, and S205 each carry phosphoserine. The segment at 128–148 (VSGGFPEDSSKEKNFVSWESQ) is disordered. In terms of domain architecture, t-SNARE coiled-coil homology spans 165–227 (LRLIHERESS…QQANQQLSRA (63 aa)). The chain crosses the membrane as a helical; Anchor for type IV membrane protein span at residues 239–259 (CIIILILVVGIVIIFFIVWGL). The Vesicular portion of the chain corresponds to 260–261 (KG).

The protein belongs to the syntaxin family. In terms of assembly, interacts with VPS11, VPS16 and VPS18. Interacts with VPS33A. Forms a SNARE complex with VTI1B, STX8 and VAMP8 which functions in the homotypic fusion of late endosomes. Component of the SNARE complex composed of STX7, STX8, VAMP7 and VTI1B that is required for heterotypic fusion of late endosomes with lysosomes. Interacts with TPC1. As to expression, detected in all tissues tested. Highest expression is found in kidney followed by lung, spleen, heart and brain. Lower expression, in skeletal muscle, liver and testis.

Its subcellular location is the early endosome membrane. May be involved in protein trafficking from the plasma membrane to the early endosome (EE) as well as in homotypic fusion of endocytic organelles. Mediates the endocytic trafficking from early endosomes to late endosomes and lysosomes. The protein is Syntaxin-7 (Stx7) of Rattus norvegicus (Rat).